The following is a 758-amino-acid chain: Polyribonucleotide nucleotidyltransferase (758 aa).

Residues D482 and D488 each contribute to the Mg(2+) site. Residues 549–608 enclose the KH domain; the sequence is PRVLSFYIDKDKISAAIGTKGKNIRSVCERSNAKIEIGDDGKVSVFAISSTEAEAAKNMM. The 69-residue stretch at 618–686 folds into the S1 motif domain; that stretch reads GSIIDAKVVK…KGGCPKLSRR (69 aa). Positions 707–758 are disordered; sequence DGLNNRDNYYNNSFNKKPEDNYHSNRPTRPRSGFSNRSRPKFGNNDSSSGFY. Low complexity predominate over residues 711-721; the sequence is NRDNYYNNSFN.

Belongs to the polyribonucleotide nucleotidyltransferase family. It depends on Mg(2+) as a cofactor.

The protein localises to the cytoplasm. The enzyme catalyses RNA(n+1) + phosphate = RNA(n) + a ribonucleoside 5'-diphosphate. Involved in mRNA degradation. Catalyzes the phosphorolysis of single-stranded polyribonucleotides processively in the 3'- to 5'-direction. This Wolbachia pipientis subsp. Culex pipiens (strain wPip) protein is Polyribonucleotide nucleotidyltransferase.